Consider the following 368-residue polypeptide: Phenylalanine--tRNA ligase alpha subunit (368 aa).

Glutamate 268 contributes to the Mg(2+) binding site.

It belongs to the class-II aminoacyl-tRNA synthetase family. Phe-tRNA synthetase alpha subunit type 1 subfamily. As to quaternary structure, tetramer of two alpha and two beta subunits. Mg(2+) serves as cofactor.

It is found in the cytoplasm. It carries out the reaction tRNA(Phe) + L-phenylalanine + ATP = L-phenylalanyl-tRNA(Phe) + AMP + diphosphate + H(+). The protein is Phenylalanine--tRNA ligase alpha subunit of Nitrobacter hamburgensis (strain DSM 10229 / NCIMB 13809 / X14).